We begin with the raw amino-acid sequence, 317 residues long: MVVSLKGRDLLCLQDYTPEEIWTILETAKMFKIWQKIGKPHRLLEGKTLAMIFQKPSTRTRVSFEVAMAHLGGHALYLNAQDLQLRRGETIADTARVLSRYVDAIMARVYAHKDVEDLAKYASVPVINGLSDFSHPCQALADYMTIWEKKGTIKGVKVVYVGDGNNVCHSLMIAGTKLGADVVVATPEGYEPDKKVIKWAEQNAAESGGSFELLHDPVKAVKDADVIYTDVWASMGQEAEAEERRKIFRPFQVNKDLVKHAKSDYMFMHCLPAHRGEEVTDDVIDSPNSVVWDEAENRLHAQKAVLALLLGGVKTGF.

Carbamoyl phosphate-binding positions include serine 57–threonine 60, glutamine 84, arginine 108, and histidine 135–glutamine 138. L-ornithine is bound by residues asparagine 166, aspartate 230, and serine 234–methionine 235. Carbamoyl phosphate contacts are provided by residues cysteine 270–leucine 271 and arginine 298.

It belongs to the aspartate/ornithine carbamoyltransferase superfamily. OTCase family. As to quaternary structure, homododecamer.

The protein localises to the cytoplasm. The enzyme catalyses carbamoyl phosphate + L-ornithine = L-citrulline + phosphate + H(+). The protein operates within amino-acid biosynthesis; L-arginine biosynthesis; L-arginine from L-ornithine and carbamoyl phosphate: step 1/3. In terms of biological role, reversibly catalyzes the transfer of the carbamoyl group from carbamoyl phosphate (CP) to the N(epsilon) atom of ornithine (ORN) to produce L-citrulline. In Pyrococcus horikoshii (strain ATCC 700860 / DSM 12428 / JCM 9974 / NBRC 100139 / OT-3), this protein is Ornithine carbamoyltransferase.